The following is a 332-amino-acid chain: Leucine carboxyl methyltransferase 1 (332 aa).

Residues Arg71, Gly96, Asp120, 169–170 (DL), and Glu196 contribute to the S-adenosyl-L-methionine site.

It belongs to the methyltransferase superfamily. LCMT family.

It catalyses the reaction [phosphatase 2A protein]-C-terminal L-leucine + S-adenosyl-L-methionine = [phosphatase 2A protein]-C-terminal L-leucine methyl ester + S-adenosyl-L-homocysteine. In terms of biological role, methylates the carboxyl group of the C-terminal leucine residue of protein phosphatase 2A catalytic subunits to form alpha-leucine ester residues. The sequence is that of Leucine carboxyl methyltransferase 1 (Lcmt1) from Rattus norvegicus (Rat).